Reading from the N-terminus, the 207-residue chain is Probable mediator of RNA polymerase II transcription subunit 19b (207 aa).

Residues aspartate 99–methionine 207 form a disordered region. Residues aspartate 127–aspartate 152 are compositionally biased toward basic residues. Over residues arginine 153 to lysine 167 the composition is skewed to basic and acidic residues. Residues glutamate 168–asparagine 179 are compositionally biased toward basic residues.

This sequence belongs to the plant Mediator complex subunit 19 family. As to quaternary structure, component of the Mediator complex.

It is found in the nucleus. Component of the Mediator complex, a coactivator involved in the regulated transcription of nearly all RNA polymerase II-dependent genes. Mediator functions as a bridge to convey information from gene-specific regulatory proteins to the basal RNA polymerase II transcription machinery. The Mediator complex, having a compact conformation in its free form, is recruited to promoters by direct interactions with regulatory proteins and serves for the assembly of a functional preinitiation complex with RNA polymerase II and the general transcription factors. The chain is Probable mediator of RNA polymerase II transcription subunit 19b (MED19B) from Arabidopsis thaliana (Mouse-ear cress).